The chain runs to 475 residues: Cytosolic enolase 3 (475 aa).

Serine 2 is subject to N-acetylserine. 2 residues coordinate substrate: histidine 200 and glutamate 209. Aspartate 252 acts as the Proton donor in catalysis. Aspartate 287, glutamate 336, and aspartate 361 together coordinate Mg(2+). Residues glutamate 336 and aspartate 361 each coordinate substrate. The active-site Proton acceptor is the lysine 386. Residues 413-416 (SHRC) and lysine 437 contribute to the substrate site.

This sequence belongs to the enolase family. As to quaternary structure, homodimer. Requires Mg(2+) as cofactor.

It localises to the cytoplasm. The protein localises to the nucleus. The enzyme catalyses (2R)-2-phosphoglycerate = phosphoenolpyruvate + H2O. It participates in carbohydrate degradation; glycolysis; pyruvate from D-glyceraldehyde 3-phosphate: step 4/5. This chain is Cytosolic enolase 3 (ENO3), found in Arabidopsis thaliana (Mouse-ear cress).